The chain runs to 154 residues: Xanthine-guanine phosphoribosyltransferase (154 aa).

Residues 37–38 (RG), arginine 69, and 88–96 (EDLVDSGDT) each bind 5-phospho-alpha-D-ribose 1-diphosphate. Arginine 69 is a GMP binding site. Aspartate 89 contacts Mg(2+). Positions 92 and 135 each coordinate guanine. Positions 92 and 135 each coordinate xanthine. Residues 92–96 (DSGDT) and 134–135 (WI) each bind GMP.

The protein belongs to the purine/pyrimidine phosphoribosyltransferase family. XGPT subfamily. In terms of assembly, homotetramer. It depends on Mg(2+) as a cofactor.

It is found in the cell inner membrane. It catalyses the reaction GMP + diphosphate = guanine + 5-phospho-alpha-D-ribose 1-diphosphate. The enzyme catalyses XMP + diphosphate = xanthine + 5-phospho-alpha-D-ribose 1-diphosphate. The catalysed reaction is IMP + diphosphate = hypoxanthine + 5-phospho-alpha-D-ribose 1-diphosphate. Its pathway is purine metabolism; GMP biosynthesis via salvage pathway; GMP from guanine: step 1/1. The protein operates within purine metabolism; XMP biosynthesis via salvage pathway; XMP from xanthine: step 1/1. Its function is as follows. Purine salvage pathway enzyme that catalyzes the transfer of the ribosyl-5-phosphate group from 5-phospho-alpha-D-ribose 1-diphosphate (PRPP) to the N9 position of the 6-oxopurines guanine and xanthine to form the corresponding ribonucleotides GMP (guanosine 5'-monophosphate) and XMP (xanthosine 5'-monophosphate), with the release of PPi. To a lesser extent, also acts on hypoxanthine. This Vibrio atlanticus (strain LGP32) (Vibrio splendidus (strain Mel32)) protein is Xanthine-guanine phosphoribosyltransferase.